We begin with the raw amino-acid sequence, 852 residues long: Taste receptor type 1 member 3 (852 aa).

The signal sequence occupies residues 1-20 (MLGPAVLGLSLWALLHPGTG). Residues 21 to 570 (APLCLSQQLR…FLAWGEPAVL (550 aa)) lie on the Extracellular side of the membrane. N-linked (GlcNAc...) asparagine glycans are attached at residues N85, N130, N264, N285, N380, N411, N432, and N475. Residues 536 to 545 (IACTFCGQDE) are required for brazzein responsiveness. The helical transmembrane segment at 571–591 (LLLLLLSLALGLVLAALGLFV) threads the bilayer. At 592–603 (HHRDSPLVQASG) the chain is on the cytoplasmic side. Residues 604 to 624 (GPLACFGLVCLGLVCLSVLLF) form a helical membrane-spanning segment. Over 625–639 (PGQPSPARCLAQQPL) the chain is Extracellular. A helical transmembrane segment spans residues 640–660 (SHLPLTGCLSTLFLQAAEIFV). Topologically, residues 661 to 682 (ESELPLSWADRLSGCLRGPWAW) are cytoplasmic. A helical transmembrane segment spans residues 683–703 (LVVLLAMLVEVALCTWYLVAF). Over 704–729 (PPEVVTDWHMLPTEALVHCRTRSWVS) the chain is Extracellular. The chain crosses the membrane as a helical span at residues 730-750 (FGLAHATNATLAFLCFLGTFL). Residues 751 to 762 (VRSQPGCYNRAR) lie on the Cytoplasmic side of the membrane. Residues 763–783 (GLTFAMLAYFITWVSFVPLLA) form a helical membrane-spanning segment. Over 784 to 789 (NVQVVL) the chain is Extracellular. The helical transmembrane segment at 790-810 (RPAVQMGALLLCVLGILAAFH) threads the bilayer. The Cytoplasmic segment spans residues 811 to 852 (LPRCYLLMRQPGLNTPEFFLGGGPGDAQGQNDGNTGNQGKHE).

The protein belongs to the G-protein coupled receptor 3 family. TAS1R subfamily. As to quaternary structure, forms homodimers or heterodimers with TAS1R1 and TAS1R2.

It localises to the cell membrane. Putative taste receptor. TAS1R1/TAS1R3 responds to the umami taste stimulus (the taste of monosodium glutamate). TAS1R2/TAS1R3 recognizes diverse natural and synthetic sweeteners. TAS1R3 is essential for the recognition and response to the disaccharide trehalose. Sequence differences within and between species can significantly influence the selectivity and specificity of taste responses. This is Taste receptor type 1 member 3 (TAS1R3) from Homo sapiens (Human).